Consider the following 492-residue polypeptide: MRRPPAPGAPRCLSWASSLFCSAASTLPGPLMAAKWFKEFPLTLKTASERARPGGAGGKPRKNSETGGAAPTPGKGRKNSAAELGASKASSGPPKDSRLSRDSLQGLIQAAAGKGRKNSRVTATATEEEPHRGAVTKSAGCSTYISRLIKVDTQEKNGKSAYPGGGSTSSSSSSSSSASSSPSSLGPELDKAKIMRQQDTVIILEDYADPYDAKRTKGQRDAERVGENDGYMEPYDAQQMITEIRRRGSKDPLVKALQLLDGPSEPGETVKVEATAKRRSSKDLLGKPPQLYDTPYEPSEGGQRVAEVKTRPADSRLPEEDDRPAAEYEQPWEWKREQIARALSVQFEGSDRPPGREDAGRPHHWQKTLKPTLSDHGDGEKVDPGLALEKQPWYHGSISRAEAESRLQPCKEAAYLVRNSESGNSKYSIALKTSQGCVHIIVAQTKDNKYTLNQTSAVFDSIPEVVHYYSNAKLPFKGAEHMTLLHPVHKLH.

Disordered stretches follow at residues 46-193 (TASE…DKAK), 214-236 (KRTK…EPYD), 260-332 (LDGP…EQPW), and 347-384 (FEGS…KVDP). The residue at position 103 (Ser-103) is a Phosphoserine. Basic and acidic residues predominate over residues 149–158 (IKVDTQEKNG). Residues 168-184 (TSSSSSSSSSASSSPSS) are compositionally biased toward low complexity. Composition is skewed to basic and acidic residues over residues 214–227 (KRTK…RVGE), 268–285 (ETVK…KDLL), 306–332 (AEVK…EQPW), 349–361 (GSDR…DAGR), and 373–383 (LSDHGDGEKVD). One can recognise an SH2 domain in the interval 393 to 488 (WYHGSISRAE…AEHMTLLHPV (96 aa)).

As to expression, expressed in heart, brain, lung and skeletal muscle.

The polypeptide is SH2 domain-containing adapter protein E (She) (Mus musculus (Mouse)).